A 187-amino-acid chain; its full sequence is Ribosome-recycling factor (187 aa).

It belongs to the RRF family.

Its subcellular location is the cytoplasm. In terms of biological role, responsible for the release of ribosomes from messenger RNA at the termination of protein biosynthesis. May increase the efficiency of translation by recycling ribosomes from one round of translation to another. This chain is Ribosome-recycling factor, found in Bradyrhizobium sp. (strain ORS 278).